Reading from the N-terminus, the 767-residue chain is Bifunctional lysine-specific demethylase and histidyl-hydroxylase NO66 (767 aa).

The interval 21–324 (TVSQKQQREK…GRQEAHRQNS (304 aa)) is disordered. Ser-44 is modified (phosphoserine). Residues 46–71 (SDDDDEDDGEGEDDNDSNSDEDESGS) are compositionally biased toward acidic residues. Residues 72 to 81 (ESDATSADDS) show a composition bias toward low complexity. The segment covering 82-98 (FSSDDNDDDDSGDEDGS) has biased composition (acidic residues). Polar residues-rich tracts occupy residues 127-137 (YTINSENSSVE) and 177-199 (ESAT…TSKP). Phosphoserine is present on Ser-214. A compositionally biased stretch (polar residues) spans 262–279 (PSSSGASCPLPSKTSKQV). The segment covering 315-324 (GRQEAHRQNS) has biased composition (basic and acidic residues). Positions 420 to 565 (CSIRILNPST…NLLEKLMPMV (146 aa)) constitute a JmjC domain. Fe cation is bound by residues His-466, Asp-468, and His-531.

The protein belongs to the ROX family. NO66 subfamily. It depends on Fe(2+) as a cofactor.

It is found in the nucleus. It carries out the reaction N(6),N(6)-dimethyl-L-lysyl(36)-[histone H3] + 2 2-oxoglutarate + 2 O2 = L-lysyl(36)-[histone H3] + 2 formaldehyde + 2 succinate + 2 CO2. Its function is as follows. Oxygenase that can act as both a histone lysine demethylase and a ribosomal histidine hydroxylase. Specifically demethylates 'Lys-4' (H3K4me) and 'Lys-36' (H3K36me) of histone H3, thereby playing a central role in histone code. This is Bifunctional lysine-specific demethylase and histidyl-hydroxylase NO66 from Drosophila willistoni (Fruit fly).